A 3419-amino-acid polypeptide reads, in one-letter code: Genome polyprotein (3419 aa).

Residues 1–25 are disordered; sequence MKNPKEEIRRIRIVNMLKRGVARVN. Topologically, residues 1–104 are cytoplasmic; sequence MKNPKEEIRR…INARKERKRR (104 aa). Positions 37 to 72 are hydrophobic; homodimerization of capsid protein C; it reads LLLGHGPIRMVLAILAFLRFTAIKPSLGLINRWGSV. The propeptide at 105 to 122 is ER anchor for capsid protein C, removed in mature form by serine protease NS3; sequence GADTSIGIIGLLLTTAMA. Residues 105–125 form a helical membrane-spanning segment; that stretch reads GADTSIGIIGLLLTTAMAAEI. Topologically, residues 126-249 are extracellular; that stretch reads TRRGSAYYMY…YTKHLIKVEN (124 aa). An N-linked (GlcNAc...) asparagine; by host glycan is attached at asparagine 192. The helical transmembrane segment at 250 to 269 threads the bilayer; the sequence is WIFRNPGFALVAVAIAWLLG. Over 270–274 the chain is Cytoplasmic; that stretch reads SSTSQ. Residues 275-290 form a helical membrane-spanning segment; that stretch reads KVIYLVMILLIAPAYS. Residues 291–741 are Extracellular-facing; that stretch reads IRCIGVSNRD…HQIFGAAFKS (451 aa). An intrachain disulfide couples cysteine 293 to cysteine 320. A Glycyl lysine isopeptide (Lys-Gly) (interchain with G-Cter in ubiquitin) cross-link involves residue lysine 328. Cystine bridges form between cysteine 350–cysteine 406, cysteine 350–cysteine 411, cysteine 364–cysteine 395, cysteine 382–cysteine 406, cysteine 382–cysteine 411, cysteine 476–cysteine 577, and cysteine 594–cysteine 625. Residues 388–401 form a fusion peptide region; that stretch reads DRGWGNGCGLFGKG. Lysine 567 participates in a covalent cross-link: Glycyl lysine isopeptide (Lys-Gly) (interchain with G-Cter in ubiquitin). The chain crosses the membrane as a helical span at residues 742 to 763; it reads LFGGMSWFSQILIGTLLVWLGL. Topologically, residues 764 to 769 are cytoplasmic; sequence NTKNGS. A helical transmembrane segment spans residues 770 to 790; the sequence is ISLTCLALGGVMIFLSTAVSA. The Lumenal portion of the chain corresponds to 791-1173; that stretch reads DVGCSVDFSK…EGLKKRMTTK (383 aa). 6 cysteine pairs are disulfide-bonded: cysteine 794–cysteine 805, cysteine 845–cysteine 933, cysteine 969–cysteine 1013, cysteine 1070–cysteine 1119, cysteine 1081–cysteine 1102, and cysteine 1103–cysteine 1106. 2 N-linked (GlcNAc...) asparagine; by host glycosylation sites follow: asparagine 920 and asparagine 997. The chain crosses the membrane as a helical span at residues 1174 to 1194; the sequence is IIMSTSMAVLVVMILGGFSMS. At 1195–1216 the chain is on the cytoplasmic side; it reads DLAKLVILMGATFAEMNTGGDV. The chain crosses the membrane as a helical span at residues 1217-1237; sequence AHLALVAAFKVRPALLVSFIF. The Lumenal portion of the chain corresponds to 1238–1266; sequence RANWTPRESMLLALASCLLQTAISALEGD. A helical membrane pass occupies residues 1267–1287; the sequence is LMVLINGFALAWLAIRAMAVP. Residues 1288 to 1291 lie on the Cytoplasmic side of the membrane; sequence RTDN. The helical transmembrane segment at 1292-1312 threads the bilayer; sequence IALPILAALTPLARGTLLVAW. The Lumenal segment spans residues 1313-1341; the sequence is RAGLATCGGIMLLSLKGKGSVKKNLPFVM. The chain crosses the membrane as a helical span at residues 1342–1362; the sequence is ALGLTAVRVVDPINVVGLLLL. Residues 1363-1369 lie on the Cytoplasmic side of the membrane; it reads TRSGKRS. Residues 1370–1390 traverse the membrane as a helical segment; the sequence is WPPSEVLTAVGLICALAGGFA. Residues 1391–1393 lie on the Lumenal side of the membrane; sequence KAD. Residues 1394 to 1414 traverse the membrane as a helical segment; it reads IEMAGPMAAVGLLIVSYVVSG. The Cytoplasmic segment spans residues 1415-1468; that stretch reads KSVDMYIERAGDITWEKDAEVTGNSPRLDVALDESGDFSLVEEDGPPMREIILK. Residues 1421–1460 are interacts with and activates NS3 protease; that stretch reads IERAGDITWEKDAEVTGNSPRLDVALDESGDFSLVEEDGP. Positions 1425-1447 are disordered; sequence GDITWEKDAEVTGNSPRLDVALD. The helical intramembrane region spans 1469-1489; sequence VVLMAICGMNPIAIPFAAGAW. The Lumenal portion of the chain corresponds to 1490 to 2166; it reads YVYVKTGKRS…KAAAAQLPET (677 aa). Residues 1499-1676 enclose the Peptidase S7 domain; that stretch reads SGALWDVPAP…KREEETPVEC (178 aa). Active-site charge relay system; for serine protease NS3 activity residues include histidine 1549, aspartate 1573, and serine 1633. Residues 1679–1835 form the Helicase ATP-binding domain; that stretch reads PSMLKKKQLT…DSNSPIMDTE (157 aa). The tract at residues 1683–1686 is important for RNA-binding; that stretch reads KKKQ. 1692–1699 serves as a coordination point for ATP; it reads LHPGAGKT. The DEAH box signature appears at 1783-1786; that stretch reads DEAH. Residues 1830–2009 form the Helicase C-terminal domain; it reads PIMDTEVEVP…GLIASLYRPE (180 aa). At lysine 1887 the chain carries N6-acetyllysine; by host. A helical membrane pass occupies residues 2167 to 2187; sequence LETIMLLGLLGTVSLGIFFVL. The Lumenal portion of the chain corresponds to 2188–2191; that stretch reads MRNK. Positions 2192–2212 form an intramembrane region, helical; the sequence is GIGKMGFGMVTLGASAWLMWL. Over 2213–2214 the chain is Cytoplasmic; it reads SE. The helical transmembrane segment at 2215–2235 threads the bilayer; sequence IEPARIACVLIVVFLLLVVLI. Over 2236-2250 the chain is Lumenal; the sequence is PEPEKQRSPQDNQMA. The helical intramembrane region spans 2251-2265; sequence IIIMVAVGLLGLITA. The Lumenal segment spans residues 2266–2303; the sequence is NELGWLERTKNDIAHLMGRREEGATMGFSMDIDLRPAS. The helical intramembrane region spans 2304 to 2324; that stretch reads AWAIYAALTTLITPAVQHAVT. Residues 2325-2340 lie on the Lumenal side of the membrane; it reads TSYNNYSLMAMATQAG. A helical transmembrane segment spans residues 2341–2361; the sequence is VLFGMGKGMPFMHGDLGVPLL. Over 2362 to 2371 the chain is Cytoplasmic; it reads MMGCYSQLTP. Residues 2372–2392 traverse the membrane as a helical segment; it reads LTLIVAIILLVAHYMYLIPGL. Over 2393-2437 the chain is Lumenal; that stretch reads QAAAARAAQKRTAAGIMKNPVVDGIVVTDIDTMTIDPQVEKKMGQ. A helical transmembrane segment spans residues 2438 to 2458; the sequence is VLLIAVAISSAVLLRTAWGWG. Residues 2459–3419 lie on the Cytoplasmic side of the membrane; sequence EAGALITAAT…GEEGSTPGVL (961 aa). In terms of domain architecture, mRNA cap 0-1 NS5-type MT spans 2517-2781; that stretch reads GGGTGETLGE…DVNLGSGTRA (265 aa). Positions 2529, 2532, 2533, 2535, 2540, and 2544 each coordinate mRNA. 2529-2535 contacts GTP; sequence KARLNQM. Serine 2572 is an S-adenosyl-L-methionine binding site. Serine 2572 bears the Phosphoserine mark. Lysine 2577 serves as the catalytic For 2'-O-MTase activity. The SUMO-interacting motif (SIM) stretch occupies residues 2593–2596; that stretch reads VVDL. Residues glycine 2602, tryptophan 2603, threonine 2620, lysine 2621, histidine 2626, glutamate 2627, aspartate 2647, valine 2648, aspartate 2662, and isoleucine 2663 each contribute to the S-adenosyl-L-methionine site. Residue aspartate 2662 is the For 2'-O-MTase activity of the active site. 2665 to 2671 serves as a coordination point for GTP; that stretch reads ESSSSPE. An mRNA-binding site is contributed by serine 2666. Lysine 2698 serves as the catalytic For 2'-O-MTase activity. MRNA-binding residues include arginine 2729 and serine 2731. Residue 2729–2731 participates in GTP binding; sequence RNS. Glutamate 2734 acts as the For 2'-O-MTase activity in catalysis. An S-adenosyl-L-methionine-binding site is contributed by tyrosine 2736. The Nuclear localization signal (NLS) signature appears at 2904 to 2910; sequence KRKRPRV. Zn(2+) contacts are provided by glutamate 2955, histidine 2959, cysteine 2964, and cysteine 2967. Positions 3045-3195 constitute a RdRp catalytic domain; it reads GKMYADDTAG…KPIDDRFAHA (151 aa). Histidine 3230, cysteine 3246, and cysteine 3365 together coordinate Zn(2+).

This sequence in the N-terminal section; belongs to the class I-like SAM-binding methyltransferase superfamily. mRNA cap 0-1 NS5-type methyltransferase family. Homodimer. Interacts with host SERTAD3; this interaction promotes capsid protein C degradation. Interacts with host CAPRIN1; this interaction is probably linked to the inhibition of stress granules formation by the virus. Interacts with host G3BP1; this interaction is probably linked to the inhibition of stress granules formation by the virus. In terms of assembly, forms heterodimers with envelope protein E in the endoplasmic reticulum and Golgi. Interacts with non-structural protein 2A. As to quaternary structure, homodimer; in the endoplasmic reticulum and Golgi. Interacts with host TYRO3, AXL and DC-SIGN proteins. Interacts with non-structural protein 2A. Interacts with host HAVCR1; this interaction likely mediates virus attachment to host cell. Interacts with host NCAM1. Interacts with host HSPA5. Interacts with Aedes aegypti SRPN25, APY and venom allergen-1 salivary proteins; the interactions do not affect Zika virus replication in human endothelial cells and keratinocytes. Homodimer; Homohexamer when secreted. Interacts with host TBK1. Interacts with host USP8. Interacts with envelope protein E. Interacts with host HSPA5. In terms of assembly, interacts with the structural protein prM/E complex, and the NS2B/NS3 protease complex. As to quaternary structure, forms a heterodimer with serine protease NS3. May form homooligomers. Interacts with human SPCS1. Interacts with non-structural protein 2A. Forms a heterodimer with NS2B. Interacts with NS4B. Interacts with unphosphorylated RNA-directed RNA polymerase NS5; this interaction stimulates RNA-directed RNA polymerase NS5 guanylyltransferase activity. Interacts with non-structural protein 2A. Interacts with host SHFL; this interaction promotes NS3 degradation via a lysosome-dependent pathway. Interacts with host CEP63; this interaction disorganizes the centrosome and inhibits host innate immune response. In terms of assembly, may interact with host ANKLE2; the interaction may cause defects in brain development, such as microcephaly. May interact with host SRPRA and SEC61G. As to quaternary structure, interacts with serine protease NS3. Interacts with NS1. Interacts with host TBK1. Homodimer. Interacts with host STAT2; this interaction inhibits the phosphorylation of the latter, and, when all viral proteins are present (polyprotein), targets STAT2 for degradation. Interacts with host TBK1 and IKBKE; these interactions lead to the inhibition of the host RIG-I signaling pathway. Interacts with host KPNA2. Interacts with host PAF1 complex; the interaction may prevent the recruitment of the host PAF1 complex to interferon-responsive genes, and thus reduces the immune response. Interacts with serine protease NS3. Interacts with host ZSWIM8; this interaction allows STAT2 binding to ZSWIM8 and subsequent proteasomal degradation leading to inhibition of interferon signaling. Specific enzymatic cleavages in vivo yield mature proteins. Cleavages in the lumen of endoplasmic reticulum are performed by host signal peptidase, whereas cleavages in the cytoplasmic side are performed by serine protease NS3. Signal cleavage at the 2K-4B site requires a prior NS3 protease-mediated cleavage at the 4A-2K site. Post-translationally, cleaved in post-Golgi vesicles by a host furin, releasing the mature small envelope protein M, and peptide pr. This cleavage is incomplete as up to 30% of viral particles still carry uncleaved prM. In terms of processing, N-glycosylation plays a role in virulence in mammalian and mosquito hosts, but may have no effect on neurovirulence. Ubiquitination by host TRIM7 promotes virus attachment and fusion of the virus and the host endosome membrane. Post-translationally, N-glycosylated. The excreted form is glycosylated, which is required for efficient secretion of the protein from infected cells. In terms of processing, acetylated by host KAT5. Acetylation modulates NS3 RNA-binding and unwinding activities and plays an important positive role for viral replication. Phosphorylated on serines residues. This phosphorylation may trigger NS5 nuclear localization. Post-translationally, sumoylated, required for regulating IFN induced interferon stimulated genes/ISGs.

The protein resides in the virion. The protein localises to the host nucleus. It localises to the host cytoplasm. Its subcellular location is the host perinuclear region. It is found in the secreted. The protein resides in the virion membrane. The protein localises to the host endoplasmic reticulum membrane. It carries out the reaction Selective hydrolysis of -Xaa-Xaa-|-Yaa- bonds in which each of the Xaa can be either Arg or Lys and Yaa can be either Ser or Ala.. The catalysed reaction is RNA(n) + a ribonucleoside 5'-triphosphate = RNA(n+1) + diphosphate. The enzyme catalyses a ribonucleoside 5'-triphosphate + H2O = a ribonucleoside 5'-diphosphate + phosphate + H(+). It catalyses the reaction ATP + H2O = ADP + phosphate + H(+). It carries out the reaction a 5'-end (5'-triphosphoguanosine)-ribonucleoside in mRNA + S-adenosyl-L-methionine = a 5'-end (N(7)-methyl 5'-triphosphoguanosine)-ribonucleoside in mRNA + S-adenosyl-L-homocysteine. The catalysed reaction is a 5'-end (N(7)-methyl 5'-triphosphoguanosine)-ribonucleoside in mRNA + S-adenosyl-L-methionine = a 5'-end (N(7)-methyl 5'-triphosphoguanosine)-(2'-O-methyl-ribonucleoside) in mRNA + S-adenosyl-L-homocysteine + H(+). In terms of biological role, plays a role in virus budding by binding to the host cell membrane and packages the viral RNA into a nucleocapsid that forms the core of the mature virus particle. During virus entry, may induce genome penetration into the host cytoplasm after hemifusion induced by the surface proteins. Can migrate to the cell nucleus where it modulates host functions. Inhibits the integrated stress response (ISR) in the infected cell. Functionally, inhibits RNA silencing by interfering with host Dicer. Its function is as follows. Prevents premature fusion activity of envelope proteins in trans-Golgi by binding to envelope protein E at pH 6.0. After virion release in extracellular space, gets dissociated from E dimers. Plays a role in host immune defense modulation and protection of envelope protein E during virion synthesis. PrM-E cleavage is inefficient, many virions are only partially matured and immature prM-E proteins could play a role in immune evasion. Contributes to fetal microcephaly in humans. Acts as a chaperone for envelope protein E during intracellular virion assembly by masking and inactivating envelope protein E fusion peptide. prM is the only viral peptide matured by host furin in the trans-Golgi network probably to avoid catastrophic activation of the viral fusion activity in acidic Golgi compartment prior to virion release. In terms of biological role, may play a role in virus budding. Exerts cytotoxic effects by activating a mitochondrial apoptotic pathway through M ectodomain. May display a viroporin activity. Functionally, binds to host cell surface receptors and mediates fusion between viral and cellular membranes. Efficient virus attachment to cell is, at least in part, mediated by host HAVCR1 in a cell-type specific manner. In addition, host NCAM1 can also be used as entry receptor. Interaction with host HSPA5 plays an important role in the early stages of infection as well. Envelope protein is synthesized in the endoplasmic reticulum and forms a heterodimer with protein prM. The heterodimer plays a role in virion budding in the ER, and the newly formed immature particle is covered with 60 spikes composed of heterodimers between precursor prM and envelope protein E. The virion is transported to the Golgi apparatus where the low pH causes the dissociation of PrM-E heterodimers and formation of E homodimers. PrM-E cleavage is inefficient, many virions are only partially matured and immature prM-E proteins could play a role in immune evasion. Its function is as follows. Plays a role in the inhibition of host RLR-induced interferon-beta activation by targeting TANK-binding kinase 1/TBK1. In addition, recruits the host deubiquitinase USP8 to cleave 'Lys-11'-linked polyubiquitin chains from caspase-1/CASP1 thus inhibiting its proteasomal degradation. In turn, stabilized CASP1 promotes cleavage of cGAS, which inhibits its ability to recognize mitochondrial DNA release and initiate type I interferon signaling. Component of the viral RNA replication complex that recruits genomic RNA, the structural protein prM/E complex, and the NS2B/NS3 protease complex to the virion assembly site and orchestrates virus morphogenesis. Antagonizes also the host MDA5-mediated induction of alpha/beta interferon antiviral response. May disrupt adherens junction formation and thereby impair proliferation of radial cells in the host cortex. In terms of biological role, required cofactor for the serine protease function of NS3. Functionally, displays three enzymatic activities: serine protease, NTPase and RNA helicase. NS3 serine protease, in association with NS2B, performs its autocleavage and cleaves the polyprotein at dibasic sites in the cytoplasm: C-prM, NS2A-NS2B, NS2B-NS3, NS3-NS4A, NS4A-2K and NS4B-NS5. NS3 RNA helicase binds RNA and unwinds dsRNA in the 3' to 5' direction. Leads to translation arrest when expressed ex vivo. Disrupts host centrosome organization in a CEP63-dependent manner to degrade host TBK1 and inhibits innate immune response. Inhibits the integrated stress response (ISR) in the infected cell. Its function is as follows. Regulates the ATPase activity of the NS3 helicase activity. NS4A allows NS3 helicase to conserve energy during unwinding. Cooperatively with NS4B suppresses the Akt-mTOR pathway and leads to cellular dysregulation. By inhibiting host ANKLE2 functions, may cause defects in brain development, such as microcephaly. Also antagonizes the host MDA5-mediated induction of alpha/beta interferon antiviral response. Inhibits the integrated stress response (ISR) in the infected cell. Functions as a signal peptide for NS4B and is required for the interferon antagonism activity of the latter. In terms of biological role, induces the formation of ER-derived membrane vesicles where the viral replication takes place. Also plays a role in the inhibition of host RLR-induced interferon-beta production at TANK-binding kinase 1/TBK1 level. Cooperatively with NS4A suppresses the Akt-mTOR pathway and leads to cellular dysregulation. Functionally, replicates the viral (+) and (-) RNA genome, and performs the capping of genomes in the cytoplasm. Methylates viral RNA cap at guanine N-7 and ribose 2'-O positions. Once sufficient NS5 is expressed, binds to the cap-proximal structure and inhibits further translation of the viral genome. Besides its role in RNA genome replication, also prevents the establishment of a cellular antiviral state by blocking the interferon-alpha/beta (IFN-alpha/beta) signaling pathway. Mechanistically, interferes with host kinases TBK1 and IKKE upstream of interferon regulatory factor 3/IRF3 to inhibit the RIG-I pathway. Also antagonizes type I interferon signaling by targeting STAT2 for degradation by the proteasome thereby preventing activation of JAK-STAT signaling pathway. Mechanistically, acts as a scaffold protein to connect host ZSWIM8/CUL3 ligase complex and STAT2, leading to STAT2 degradation. Within the host nucleus, disrupts host SUMO1 and STAT2 co-localization with PML, resulting in PML degradation. May also reduce immune responses by preventing the recruitment of the host PAF1 complex to interferon-responsive genes. In Aedes aegypti (Yellowfever mosquito), this protein is Genome polyprotein.